The following is a 414-amino-acid chain: Glyco-Gag protein (414 aa).

Residues 1–51 are Cytoplasmic-facing; sequence MSGASSGTAIGAHLFGVSPECRVLIGDEGAGPSKSLSEVSFSVWYQSRAAR. A helical membrane pass occupies residues 52-72; the sequence is LVIFCLVASFLVPCLTFLIAE. Residues 73 to 414 lie on the Extracellular side of the membrane; sequence TVMGQTIATP…TNLAQVKQVV (342 aa). Asparagine 134 carries an N-linked (GlcNAc...) asparagine; by host glycan. Residues 171–282 are disordered; sequence VRPFLPPPKP…LREGPNNRPQ (112 aa). A compositionally biased stretch (pro residues) spans 174 to 193; that stretch reads FLPPPKPPTPLPQPLSPQPS. The segment covering 194-206 has biased composition (low complexity); sequence APLTSSLYPVLPK. Residues 210 to 220 are compositionally biased toward pro residues; sequence PKPPVLPPDPS.

Post-translationally, glycosylated by host. Cleaved by host near the middle of the molecule, releasing the c-terminal half containing capsid and nucleoprotein domains op GAG.

The protein resides in the host cell membrane. Plays a role in viral particle release. Presumably acts by facilitating the fission of the virion bud at the cell surface. The polypeptide is Glyco-Gag protein (Felidae (cat family)).